We begin with the raw amino-acid sequence, 169 residues long: N-alpha-acetyltransferase 50 (169 aa).

In terms of domain architecture, N-acetyltransferase spans 6–155; sequence IELGDVTPHN…DAHVLQKNLK (150 aa). Threonine 12 carries the post-translational modification Phosphothreonine. Tyrosine 31 is a binding site for substrate. Lysine 34 and lysine 37 each carry N6-acetyllysine. Tyrosine 73 is an active-site residue. Methionine 75 lines the substrate pocket. An acetyl-CoA-binding site is contributed by 77–90; that stretch reads LGCLAPYRRLGIGT. The residue at position 110 (tyrosine 110) is a Phosphotyrosine. Histidine 112 is a catalytic residue. 117 to 126 serves as a coordination point for CoA; that stretch reads NESAIDFYRK. The tract at residues 138-141 is substrate; that stretch reads YYKR. Lysine 140 carries the post-translational modification N6-acetyllysine.

It belongs to the acetyltransferase family. GNAT subfamily. As to quaternary structure, component of the N-terminal acetyltransferase E (NatE) complex at least composed of NAA10, NAA15 and NAA50. Interacts with NAA10. Interacts with NAA15. Predominantly interacts with NAA15 in the N-terminal acetyltransferase A complex (NatA complex); the interactions reduce the acetylation activity of the NatA complex. Component of the N-terminal acetyltransferase E (NatE)/HYPK complex at least composed of NAA10, NAA15, NAA50 and HYPK. Within the complex interacts with NAA15. Its capacity to interact with the NatA complex is reduced by HYPK. Interacts with NAA35.

It is found in the cytoplasm. The protein localises to the nucleus. The catalysed reaction is N-terminal L-methionyl-L-alanyl-[protein] + acetyl-CoA = N-terminal N(alpha)-acetyl-L-methionyl-L-alanyl-[protein] + CoA + H(+). The enzyme catalyses N-terminal L-methionyl-L-seryl-[protein] + acetyl-CoA = N-terminal N(alpha)-acetyl-L-methionyl-L-seryl-[protein] + CoA + H(+). It carries out the reaction N-terminal L-methionyl-L-valyl-[protein] + acetyl-CoA = N-terminal N(alpha)-acetyl-L-methionyl-L-valyl-[protein] + CoA + H(+). It catalyses the reaction N-terminal L-methionyl-L-threonyl-[protein] + acetyl-CoA = N-terminal N(alpha)-acetyl-L-methionyl-L-threonyl-[protein] + CoA + H(+). The catalysed reaction is N-terminal L-methionyl-L-lysyl-[protein] + acetyl-CoA = N-terminal N(alpha)-acetyl-L-methionyl-L-lysyl-[protein] + CoA + H(+). The enzyme catalyses N-terminal L-methionyl-L-leucyl-[protein] + acetyl-CoA = N-terminal N(alpha)-acetyl-L-methionyl-L-leucyl-[protein] + CoA + H(+). It carries out the reaction N-terminal L-methionyl-L-phenylalanyl-[protein] + acetyl-CoA = N-terminal N(alpha)-acetyl-L-methionyl-L-phenylalanyl-[protein] + CoA + H(+). It catalyses the reaction N-terminal L-methionyl-L-tyrosyl-[protein] + acetyl-CoA = N-terminal N(alpha)-acetyl-L-methionyl-L-tyrosyl-[protein] + CoA + H(+). Its function is as follows. N-alpha-acetyltransferase that acetylates the N-terminus of proteins that retain their initiating methionine. Has a broad substrate specificity: able to acetylate the initiator methionine of most peptides, except for those with a proline in second position. Also displays N-epsilon-acetyltransferase activity by mediating acetylation of the side chain of specific lysines on proteins. Autoacetylates in vivo. The relevance of N-epsilon-acetyltransferase activity is however unclear: able to acetylate H4 in vitro, but this result has not been confirmed in vivo. Component of N-alpha-acetyltransferase complexes containing NAA10 and NAA15, which has N-alpha-acetyltransferase activity. Does not influence the acetyltransferase activity of NAA10. However, it negatively regulates the N-alpha-acetyltransferase activity of the N-terminal acetyltransferase A complex (also called the NatA complex). The multiprotein complexes probably constitute the major contributor for N-terminal acetylation at the ribosome exit tunnel, with NAA10 acetylating all amino termini that are devoid of methionine and NAA50 acetylating other peptides. Required for sister chromatid cohesion during mitosis by promoting binding of CDCA5/sororin to cohesin: may act by counteracting the function of NAA10. The sequence is that of N-alpha-acetyltransferase 50 from Mus musculus (Mouse).